A 136-amino-acid chain; its full sequence is Large ribosomal subunit protein uL16 (136 aa).

The protein belongs to the universal ribosomal protein uL16 family. Part of the 50S ribosomal subunit.

Its function is as follows. Binds 23S rRNA and is also seen to make contacts with the A and possibly P site tRNAs. The protein is Large ribosomal subunit protein uL16 of Shewanella halifaxensis (strain HAW-EB4).